The chain runs to 243 residues: Small ribosomal subunit protein uS3 (243 aa).

Residues 39 to 110 (IRTFIQKKYG…QVRINVVEVE (72 aa)) form the KH type-2 domain. A disordered region spans residues 216 to 243 (QTIPVGASPKRKASRRPQQFEDRSNENS). A compositionally biased stretch (basic and acidic residues) spans 233 to 243 (QQFEDRSNENS).

This sequence belongs to the universal ribosomal protein uS3 family. As to quaternary structure, part of the 30S ribosomal subunit. Forms a tight complex with proteins S10 and S14.

In terms of biological role, binds the lower part of the 30S subunit head. Binds mRNA in the 70S ribosome, positioning it for translation. The protein is Small ribosomal subunit protein uS3 of Prochlorococcus marinus (strain AS9601).